Reading from the N-terminus, the 329-residue chain is GTPase Obg (329 aa).

The Obg domain occupies 1 to 159 (MQFIDEAKIF…MWVWLHLKLL (159 aa)). The OBG-type G domain occupies 160-327 (SDVGLVGLPN…LLANILSELQ (168 aa)). Residues 166 to 173 (GLPNAGKS), 191 to 195 (FTTLT), 212 to 215 (DIPG), 279 to 282 (TKTD), and 308 to 310 (SSY) each bind GTP. Mg(2+) contacts are provided by Ser173 and Thr193.

This sequence belongs to the TRAFAC class OBG-HflX-like GTPase superfamily. OBG GTPase family. Monomer. Requires Mg(2+) as cofactor.

Its subcellular location is the cytoplasm. Its function is as follows. An essential GTPase which binds GTP, GDP and possibly (p)ppGpp with moderate affinity, with high nucleotide exchange rates and a fairly low GTP hydrolysis rate. Plays a role in control of the cell cycle, stress response, ribosome biogenesis and in those bacteria that undergo differentiation, in morphogenesis control. This is GTPase Obg from Orientia tsutsugamushi (strain Boryong) (Rickettsia tsutsugamushi).